The primary structure comprises 1047 residues: MNNNDMDQKAKELQNVLEQFYLTTDNPKRKEIDTILNNYKAQSDSYEHVQYYLVHSDNQYVIWFSLSVIEDKVNKAWNSISASSQTQTKGLLLDIYLNKTGANSNSTVKNVLPQFIISKLGQVIADIGRYEFESNPQSYLLNITSIVRNPSTSIRGINLLQCISDSFTTNKKVISQQKKTTLKKLLHQNSPIIIQVLVDCLGQLFDQNAEKKFKHANLLAFHVGSPDTNTYTASFNAESKNLTKAVFDALLSYFTWVPLSDLLVPSLFDILFKYLRLDKNSIPALECLNEIVSKNLVPKGFESFLMRIFHQVYSLLTDIVSNGGQQINQYHPEFLNKFTQFIQIFINNHLGRIETNPNFPIPDFLGLLFQYSFFQTQPESFLQCIDIWSTFLDYLINLSQENGTPPPSKYTDGLLLFQSELVKRILYIFNNNTLSELDDEDKEINENGISETQLESYIKKSIEVVAKVTELYPEKSLENLYPLFTQNVTSFFCKAEESIKQGVSMENEQQFQYLVKDVTTILHLFGRLADQFVVSFAQTFTAANFIFQKLLDMCLFSVNQYIYKFGSDWEKLQIELLCTIRSFCFWLAEYGNQVRAIVGQQPDFDSNITKLISIIVPLFERNAPESILSSAGKLLMSLATISKPLNLFTQMDMLISNIHNICAPLSPSIQSILYPAISCTILLPPSNVNLSQQWDQRRPKYSPFIKGITASFLEIPQIPNFVEGKIFCKEELIQRVLRVLKVVTAIIRTVPEVTQAKSILHDGIQDTLKVTLGLFRVYISYPIVLEAILDFFFVLFEFLKAQVGVVFTQQTISTFLDILGGDNLNQLLSSGNDTGISIIKKLIEILTFIVQQPGNSFESLLGSTIEFSMEKLYPMIANTSSVLRSPFFTLLYSILDNHWKQCQQIQINSILTSFQSIFKQNDVNLFKQNLDHFEKLNSKLKLYEKISSMEPVFGCSFISMFFDVLISDTQSVHTDDIIVTIYRFASLNFDKFFNEFFTTFLVQKNQLSNEQKQILRSNFSNAIDQPTFSTNMTQFINDFSYFSFINS.

An Importin N-terminal domain is found at 32–98; it reads IDTILNNYKA…KGLLLDIYLN (67 aa).

Belongs to the exportin family.

The protein resides in the nucleus. It is found in the cytoplasm. Probably mediates the nuclear export of actin and profilin-actin complexes. In Dictyostelium discoideum (Social amoeba), this protein is Exportin-6 (xpo6).